Here is a 423-residue protein sequence, read N- to C-terminus: Carboxypeptidase S1 (423 aa).

4 cysteine pairs are disulfide-bonded: Cys-8–Cys-68, Cys-55–Cys-300, Cys-223–Cys-246, and Cys-230–Cys-239. The active site involves Ser-143. Asn-200 carries N-linked (GlcNAc...) asparagine glycosylation. Residue Asp-340 is part of the active site. Cys-343 is a substrate binding site. His-397 is a catalytic residue. Glu-398 serves as a coordination point for substrate.

This sequence belongs to the peptidase S10 family.

The catalysed reaction is Preferential release of a C-terminal arginine or lysine residue.. This is Carboxypeptidase S1 from Penicillium janthinellum (Penicillium vitale).